A 386-amino-acid chain; its full sequence is 2-isopropylmalate synthase (386 aa).

One can recognise a Pyruvate carboxyltransferase domain in the interval 15-269; the sequence is IRIFDTTLRD…ETNVKTWKLY (255 aa). A divalent metal cation contacts are provided by D24, H207, H209, and N243.

The protein belongs to the alpha-IPM synthase/homocitrate synthase family. Homodimer. A divalent metal cation serves as cofactor.

The enzyme catalyses 3-methyl-2-oxobutanoate + acetyl-CoA + H2O = (2S)-2-isopropylmalate + CoA + H(+). It participates in amino-acid biosynthesis; L-leucine biosynthesis; L-leucine from 3-methyl-2-oxobutanoate: step 1/4. In terms of biological role, catalyzes the condensation of the acetyl group of acetyl-CoA with 3-methyl-2-oxobutanoate (2-oxoisovalerate) to form 3-carboxy-3-hydroxy-4-methylpentanoate (2-isopropylmalate). Carries out the first step of the leucine biosynthesis pathway. In Saccharolobus solfataricus (strain ATCC 35092 / DSM 1617 / JCM 11322 / P2) (Sulfolobus solfataricus), this protein is 2-isopropylmalate synthase (leuA).